The primary structure comprises 547 residues: Chaperonin GroEL (547 aa).

ATP-binding positions include 29–32 (TLGP), K50, 86–90 (DGTTT), G414, and D495. Residues 525–547 (PSDKEDSIPPMRGGMGGMGGMDF) are disordered. Over residues 537-547 (GGMGGMGGMDF) the composition is skewed to gly residues.

The protein belongs to the chaperonin (HSP60) family. As to quaternary structure, forms a cylinder of 14 subunits composed of two heptameric rings stacked back-to-back. Interacts with the co-chaperonin GroES.

Its subcellular location is the cytoplasm. It catalyses the reaction ATP + H2O + a folded polypeptide = ADP + phosphate + an unfolded polypeptide.. Functionally, together with its co-chaperonin GroES, plays an essential role in assisting protein folding. The GroEL-GroES system forms a nano-cage that allows encapsulation of the non-native substrate proteins and provides a physical environment optimized to promote and accelerate protein folding. The sequence is that of Chaperonin GroEL from Rickettsia felis (strain ATCC VR-1525 / URRWXCal2) (Rickettsia azadi).